A 143-amino-acid chain; its full sequence is Transcriptional regulator MraZ (143 aa).

SpoVT-AbrB domains follow at residues 6 to 49 and 78 to 121; these read TYNH…NEAE and SDET…DLKV.

This sequence belongs to the MraZ family. As to quaternary structure, forms oligomers.

Its subcellular location is the cytoplasm. The protein localises to the nucleoid. This Spiroplasma kunkelii protein is Transcriptional regulator MraZ.